The following is a 187-amino-acid chain: UPF0232 protein JTY_0004 (187 aa).

Composition is skewed to basic and acidic residues over residues 1–17 and 24–45; these read MTGSVDRPDQNRGERSM and LVRRTLDEARAAARARGQDAGR. 2 disordered regions span residues 1 to 75 and 168 to 187; these read MTGS…DPQP and PSWRKGPRHIAGRGPRDTYG.

It belongs to the UPF0232 family.

The sequence is that of UPF0232 protein JTY_0004 from Mycobacterium bovis (strain BCG / Tokyo 172 / ATCC 35737 / TMC 1019).